Here is a 606-residue protein sequence, read N- to C-terminus: Armadillo repeat-containing X-linked protein 5 (606 aa).

Residues 1 to 85 (MIGSKTKRKA…KVKKKKDKTN (85 aa)) form a disordered region. The segment covering 15–26 (GASSKPGTNSPA) has biased composition (polar residues). A compositionally biased stretch (basic and acidic residues) spans 40–59 (VKAEPKEEWGNQAEARDEAV). ARM repeat units lie at residues 349–388 (CKSR…GISP), 470–509 (VKFD…CLSK), 511–551 (QANT…NINF), and 568–606 (SELI…ILKL).

The protein belongs to the eutherian X-chromosome-specific Armcx family. Highly expressed in the developing neural tissues, neural crest derivatives and hind limbs.

In Mus musculus (Mouse), this protein is Armadillo repeat-containing X-linked protein 5 (Armcx5).